The primary structure comprises 279 residues: Putative pyruvate, phosphate dikinase regulatory protein (279 aa).

154–161 (GVSRTSKT) is a binding site for ADP.

It belongs to the pyruvate, phosphate/water dikinase regulatory protein family. PDRP subfamily.

The catalysed reaction is N(tele)-phospho-L-histidyl/L-threonyl-[pyruvate, phosphate dikinase] + ADP = N(tele)-phospho-L-histidyl/O-phospho-L-threonyl-[pyruvate, phosphate dikinase] + AMP + H(+). The enzyme catalyses N(tele)-phospho-L-histidyl/O-phospho-L-threonyl-[pyruvate, phosphate dikinase] + phosphate + H(+) = N(tele)-phospho-L-histidyl/L-threonyl-[pyruvate, phosphate dikinase] + diphosphate. Functionally, bifunctional serine/threonine kinase and phosphorylase involved in the regulation of the pyruvate, phosphate dikinase (PPDK) by catalyzing its phosphorylation/dephosphorylation. In Rhodopseudomonas palustris (strain BisB18), this protein is Putative pyruvate, phosphate dikinase regulatory protein.